The primary structure comprises 343 residues: Ribosomal RNA small subunit methyltransferase C (343 aa).

Belongs to the methyltransferase superfamily. RsmC family. As to quaternary structure, monomer.

It is found in the cytoplasm. The enzyme catalyses guanosine(1207) in 16S rRNA + S-adenosyl-L-methionine = N(2)-methylguanosine(1207) in 16S rRNA + S-adenosyl-L-homocysteine + H(+). Its function is as follows. Specifically methylates the guanine in position 1207 of 16S rRNA in the 30S particle. This is Ribosomal RNA small subunit methyltransferase C from Escherichia coli (strain ATCC 8739 / DSM 1576 / NBRC 3972 / NCIMB 8545 / WDCM 00012 / Crooks).